Here is a 284-residue protein sequence, read N- to C-terminus: ELMO domain-containing protein B (284 aa).

The ELMO domain occupies 124 to 276; it reads EHEASLERLW…EFETKISQNS (153 aa).

This Dictyostelium discoideum (Social amoeba) protein is ELMO domain-containing protein B (elmoB).